We begin with the raw amino-acid sequence, 668 residues long: Tyrosine-protein phosphatase non-receptor type ptp-2 (668 aa).

SH2 domains are found at residues 10 to 113 and 134 to 232; these read NFYY…KKPV and WWHG…EEPL. Residues 264–580 enclose the Tyrosine-protein phosphatase domain; that stretch reads ISEEFDRLSQ…QFLYKALAFY (317 aa). The active-site Phosphocysteine intermediate is C518. The segment at 603 to 668 is disordered; that stretch reads PRRLRPTPNA…SSTLLKSTKK (66 aa). 2 stretches are compositionally biased toward low complexity: residues 616-634 and 652-668; these read SSARQVTSSRPSSSASSRT and STSSTSSSSTLLKSTKK.

Belongs to the protein-tyrosine phosphatase family. Non-receptor class 2 subfamily. Expressed in embryonic cells, developing vulva, body wall muscles, head neurons and gonadal sheath cells.

It localises to the cytoplasm. It carries out the reaction O-phospho-L-tyrosyl-[protein] + H2O = L-tyrosyl-[protein] + phosphate. Functionally, involved in embryonic and larval development. Plays a role in oogenesis by regulating mpk-1 phosphorylation and oocyte maturation in response to major sperm protein (MSP). During the formation of neuromuscular junctions at the larval stage, negatively regulates membrane protrusion from body wall muscles probably downstream of receptor egl-15. Plays a role in fluid homeostasis probably downstream of receptor egl-15 and adapter soc-1. Promotes vulva induction and negatively regulates fertility probably downstream of receptor let-23. Negatively regulates daf-2-mediated repression of dauer formation. This is Tyrosine-protein phosphatase non-receptor type ptp-2 from Caenorhabditis elegans.